A 447-amino-acid polypeptide reads, in one-letter code: uncharacterized protein (447 aa).

4 residues coordinate [4Fe-4S] cluster: C87, C93, C96, and C162. S-adenosyl-L-methionine is bound by residues Q284, Y313, E334, and D375. C402 (nucleophile) is an active-site residue.

It belongs to the class I-like SAM-binding methyltransferase superfamily. RNA M5U methyltransferase family.

This is an uncharacterized protein from Nanoarchaeum equitans (strain Kin4-M).